A 188-amino-acid chain; its full sequence is dTTP/UTP pyrophosphatase (188 aa).

The Proton acceptor role is filled by D70.

Belongs to the Maf family. YhdE subfamily. A divalent metal cation serves as cofactor.

The protein resides in the cytoplasm. The enzyme catalyses dTTP + H2O = dTMP + diphosphate + H(+). It catalyses the reaction UTP + H2O = UMP + diphosphate + H(+). In terms of biological role, nucleoside triphosphate pyrophosphatase that hydrolyzes dTTP and UTP. May have a dual role in cell division arrest and in preventing the incorporation of modified nucleotides into cellular nucleic acids. The polypeptide is dTTP/UTP pyrophosphatase (Clostridium botulinum (strain Eklund 17B / Type B)).